A 270-amino-acid polypeptide reads, in one-letter code: Ribosomal RNA small subunit methyltransferase A (270 aa).

Residues Asn-18, Leu-20, Gly-45, Glu-66, Asp-91, and Asn-112 each coordinate S-adenosyl-L-methionine.

Belongs to the class I-like SAM-binding methyltransferase superfamily. rRNA adenine N(6)-methyltransferase family. RsmA subfamily.

Its subcellular location is the cytoplasm. It carries out the reaction adenosine(1518)/adenosine(1519) in 16S rRNA + 4 S-adenosyl-L-methionine = N(6)-dimethyladenosine(1518)/N(6)-dimethyladenosine(1519) in 16S rRNA + 4 S-adenosyl-L-homocysteine + 4 H(+). In terms of biological role, specifically dimethylates two adjacent adenosines (A1518 and A1519) in the loop of a conserved hairpin near the 3'-end of 16S rRNA in the 30S particle. May play a critical role in biogenesis of 30S subunits. In Shewanella piezotolerans (strain WP3 / JCM 13877), this protein is Ribosomal RNA small subunit methyltransferase A.